The chain runs to 32 residues: Ranatuerin-2CSa (32 aa).

Cysteines 27 and 32 form a disulfide.

In terms of tissue distribution, expressed by the skin glands.

It localises to the secreted. It is found in the target cell membrane. Antibacterial peptide with amphipathic alpha-helical structure. Active against E.coli ATCC 25726 (MIC=4-5 uM) and S.aureus ATCC 25923 (MIC=8-10 uM). Has a weak hemolytic activity on human erythrocytes (LC(50)=150-160 uM). The protein is Ranatuerin-2CSa of Rana cascadae (Cascades frog).